We begin with the raw amino-acid sequence, 630 residues long: tRNA uridine 5-carboxymethylaminomethyl modification enzyme MnmG (630 aa).

15–20 lines the FAD pocket; sequence GAGHAG. Position 276 to 290 (276 to 290) interacts with NAD(+); sequence GPRYCPSIEDKIVRF.

Belongs to the MnmG family. As to quaternary structure, homodimer. Heterotetramer of two MnmE and two MnmG subunits. Requires FAD as cofactor.

It localises to the cytoplasm. NAD-binding protein involved in the addition of a carboxymethylaminomethyl (cmnm) group at the wobble position (U34) of certain tRNAs, forming tRNA-cmnm(5)s(2)U34. This chain is tRNA uridine 5-carboxymethylaminomethyl modification enzyme MnmG, found in Latilactobacillus sakei subsp. sakei (strain 23K) (Lactobacillus sakei subsp. sakei).